A 384-amino-acid polypeptide reads, in one-letter code: Methylthioribose-1-phosphate isomerase (384 aa).

Asp255 functions as the Proton donor in the catalytic mechanism.

Belongs to the eIF-2B alpha/beta/delta subunits family. MtnA subfamily.

It localises to the cytoplasm. The protein resides in the nucleus. It catalyses the reaction 5-(methylsulfanyl)-alpha-D-ribose 1-phosphate = 5-(methylsulfanyl)-D-ribulose 1-phosphate. The protein operates within amino-acid biosynthesis; L-methionine biosynthesis via salvage pathway; L-methionine from S-methyl-5-thio-alpha-D-ribose 1-phosphate: step 1/6. Catalyzes the interconversion of methylthioribose-1-phosphate (MTR-1-P) into methylthioribulose-1-phosphate (MTRu-1-P). This Talaromyces marneffei (strain ATCC 18224 / CBS 334.59 / QM 7333) (Penicillium marneffei) protein is Methylthioribose-1-phosphate isomerase (mri1).